The chain runs to 333 residues: Nucleoid-associated protein VV1_3120 (333 aa).

Belongs to the YejK family.

The protein localises to the cytoplasm. Its subcellular location is the nucleoid. The polypeptide is Nucleoid-associated protein VV1_3120 (Vibrio vulnificus (strain CMCP6)).